The chain runs to 417 residues: Tryptophan synthase beta chain (417 aa).

Lys111 is modified (N6-(pyridoxal phosphate)lysine).

This sequence belongs to the TrpB family. As to quaternary structure, tetramer of two alpha and two beta chains. Pyridoxal 5'-phosphate is required as a cofactor.

The enzyme catalyses (1S,2R)-1-C-(indol-3-yl)glycerol 3-phosphate + L-serine = D-glyceraldehyde 3-phosphate + L-tryptophan + H2O. It participates in amino-acid biosynthesis; L-tryptophan biosynthesis; L-tryptophan from chorismate: step 5/5. Functionally, the beta subunit is responsible for the synthesis of L-tryptophan from indole and L-serine. The polypeptide is Tryptophan synthase beta chain (Fervidobacterium nodosum (strain ATCC 35602 / DSM 5306 / Rt17-B1)).